The primary structure comprises 219 residues: Large ribosomal subunit protein uL3 (219 aa).

A disordered region spans residues 134-153 (RASHGNSRSHNVPGSIGMAQ). Position 153 is an N5-methylglutamine (glutamine 153).

It belongs to the universal ribosomal protein uL3 family. In terms of assembly, part of the 50S ribosomal subunit. Forms a cluster with proteins L14 and L19. Methylated by PrmB.

Functionally, one of the primary rRNA binding proteins, it binds directly near the 3'-end of the 23S rRNA, where it nucleates assembly of the 50S subunit. This Paraburkholderia phytofirmans (strain DSM 17436 / LMG 22146 / PsJN) (Burkholderia phytofirmans) protein is Large ribosomal subunit protein uL3.